Reading from the N-terminus, the 610-residue chain is Terminase, large subunit (610 aa).

Positions 30–94 are ssDNA-binding; sequence RKDEDGIHWI…SRYMGLPNLK (65 aa). The interval 131 to 301 is ATPase activity; sequence DYGVIKVQLR…NHFYDIWTAA (171 aa). ATP is bound by residues Gln-138 and Gln-143. The Walker A motif signature appears at 161–167; sequence SRQLGKT. Arg-202 contributes to the ATP binding site. Residues 251–256 carry the Walker B motif motif; sequence MIYIDE. Glu-256 acts as the For ATPase activity in catalysis. An ATPase coupling motif is present at residues 285 to 287; it reads TTT. Residues 328 to 352 form a binding to the portal protein region; it reads IFDDGWQWSIQTINGSSLAQFRQEH. The interval 360–559 is nuclease activity; sequence SGTLISGMKL…FGWLSTQSKF (200 aa). Residues Asp-401, Glu-458, and Asp-542 each coordinate Mg(2+).

Belongs to the Tequatrovirus large terminase family. In terms of assembly, interacts with the terminase small subunit; the active complex is composed of a pentamer of terminase large subunits and a dodecamer of terminase small subunits. Interacts with the portal protein. Interacts with the RNA polymerase sigma factor gp55. It depends on Mg(2+) as a cofactor. Phosphorylated.

Its activity is regulated as follows. Stimulated up to 50 to 100-fold by the terminase small subunit. Modestly activated by portal protein and single-stranded binding protein gp32 multimers. Functionally, the terminase large subunit acts as an ATP driven molecular motor necessary for viral DNA translocation into empty capsids and as an endonuclease that cuts the viral genome to initiate and to end a packaging reaction. The terminase lies at a unique vertex of the procapsid and is composed of two subunits, a small terminase subunit involved in viral DNA recognition (packaging sequence), and a large terminase subunit possessing endonucleolytic and ATPase activities. Both terminase subunits heterooligomerize and are docked on the portal protein to form the packaging machine. The terminase large subunit exhibits endonuclease activity and cleaves the viral genome concatemer once the capsid is full (headful packaging). Once the capsid is packaged with the DNA, the terminase complex is substituted by the tail. This chain is Terminase, large subunit (17), found in Escherichia coli (Bacteriophage T4).